The sequence spans 89 residues: Small ribosomal subunit protein uS14 (89 aa).

This sequence belongs to the universal ribosomal protein uS14 family. In terms of assembly, part of the 30S ribosomal subunit. Contacts proteins S3 and S10.

Binds 16S rRNA, required for the assembly of 30S particles and may also be responsible for determining the conformation of the 16S rRNA at the A site. This is Small ribosomal subunit protein uS14 from Porphyromonas gingivalis (strain ATCC 33277 / DSM 20709 / CIP 103683 / JCM 12257 / NCTC 11834 / 2561).